A 719-amino-acid polypeptide reads, in one-letter code: Translation factor guf1, mitochondrial (719 aa).

A mitochondrion-targeting transit peptide spans 1–75 (MRGALCRPDV…TRCFSALRSL (75 aa)). Residues 119 to 301 (ERYRNFCIVA…AVISNVPAPV (183 aa)) form the tr-type G domain. Residues 128–135 (AHIDHGKS), 194–198 (DTPGH), and 248–251 (NKID) each bind GTP.

The protein belongs to the TRAFAC class translation factor GTPase superfamily. Classic translation factor GTPase family. LepA subfamily.

Its subcellular location is the mitochondrion inner membrane. The catalysed reaction is GTP + H2O = GDP + phosphate + H(+). Its function is as follows. Promotes mitochondrial protein synthesis. May act as a fidelity factor of the translation reaction, by catalyzing a one-codon backward translocation of tRNAs on improperly translocated ribosomes. Binds to mitochondrial ribosomes in a GTP-dependent manner. The chain is Translation factor guf1, mitochondrial (guf1) from Neurospora crassa (strain ATCC 24698 / 74-OR23-1A / CBS 708.71 / DSM 1257 / FGSC 987).